A 361-amino-acid polypeptide reads, in one-letter code: Queuine tRNA-ribosyltransferase (361 aa).

The active-site Proton acceptor is the D92. Residues 92–96 (DSGGF), D146, Q189, and G216 each bind substrate. The segment at 247 to 253 (GVGKPAD) is RNA binding. The Nucleophile role is filled by D266. The interval 271–275 (TRSGR) is RNA binding; important for wobble base 34 recognition. Zn(2+) contacts are provided by C304, C306, C309, and H335.

This sequence belongs to the queuine tRNA-ribosyltransferase family. In terms of assembly, homodimer. Within each dimer, one monomer is responsible for RNA recognition and catalysis, while the other monomer binds to the replacement base PreQ1. The cofactor is Zn(2+).

It carries out the reaction 7-aminomethyl-7-carbaguanine + guanosine(34) in tRNA = 7-aminomethyl-7-carbaguanosine(34) in tRNA + guanine. Its pathway is tRNA modification; tRNA-queuosine biosynthesis. In terms of biological role, catalyzes the base-exchange of a guanine (G) residue with the queuine precursor 7-aminomethyl-7-deazaguanine (PreQ1) at position 34 (anticodon wobble position) in tRNAs with GU(N) anticodons (tRNA-Asp, -Asn, -His and -Tyr). Catalysis occurs through a double-displacement mechanism. The nucleophile active site attacks the C1' of nucleotide 34 to detach the guanine base from the RNA, forming a covalent enzyme-RNA intermediate. The proton acceptor active site deprotonates the incoming PreQ1, allowing a nucleophilic attack on the C1' of the ribose to form the product. After dissociation, two additional enzymatic reactions on the tRNA convert PreQ1 to queuine (Q), resulting in the hypermodified nucleoside queuosine (7-(((4,5-cis-dihydroxy-2-cyclopenten-1-yl)amino)methyl)-7-deazaguanosine). This chain is Queuine tRNA-ribosyltransferase, found in Rickettsia peacockii (strain Rustic).